The sequence spans 524 residues: uncharacterized protein (524 aa).

A helical transmembrane segment spans residues 13-33; the sequence is EFILLILGMTVVGIVITMGLV.

It is found in the membrane. This is an uncharacterized protein from Methanocaldococcus jannaschii (strain ATCC 43067 / DSM 2661 / JAL-1 / JCM 10045 / NBRC 100440) (Methanococcus jannaschii).